The following is a 448-amino-acid chain: RuvB-like 2 (448 aa).

ATP is bound at residue 73 to 80; that stretch reads GEPGAGKT.

Belongs to the RuvB family. In terms of assembly, forms homohexameric rings. May form a dodecamer with ruvb-1 made of two stacked hexameric rings. As to expression, expressed in gonadal cells.

Its subcellular location is the cytoplasm. It is found in the nucleus. It catalyses the reaction ATP + H2O = ADP + phosphate + H(+). Functionally, possesses single-stranded DNA-stimulated ATPase and ATP-dependent DNA helicase (5' to 3') activity suggesting a role in nuclear processes such as recombination and transcription. May participate in several chromatin remodeling complexes that mediate the ATP-dependent exchange of histones and remodel chromatin by shifting nucleosomes. Involvement in these complexes is likely required for transcriptional activation of selected genes and DNA repair in response to DNA damage. Has a role in gonadal development. Involved in the endoplasmic reticulum (ER)-associated degradation (ERAD) pathway where it negatively regulates expression of ER stress response genes. Specifically, negatively controls the expression of ER homeostasis regulator ckb-2 in a cdc-48.1/2-dependent manner. The chain is RuvB-like 2 from Caenorhabditis elegans.